Consider the following 98-residue polypeptide: NADH-ubiquinone oxidoreductase chain 4L (98 aa).

Transmembrane regions (helical) follow at residues 1–21 (MSLVHMNVIVAFTLSLVGLLM), 29–49 (ALLCMEGMMLSLFVLAALTIL), and 61–81 (IILLVFAACEAAIGLALLVTI).

The protein belongs to the complex I subunit 4L family. As to quaternary structure, core subunit of respiratory chain NADH dehydrogenase (Complex I) which is composed of 45 different subunits.

The protein resides in the mitochondrion inner membrane. The enzyme catalyses a ubiquinone + NADH + 5 H(+)(in) = a ubiquinol + NAD(+) + 4 H(+)(out). In terms of biological role, core subunit of the mitochondrial membrane respiratory chain NADH dehydrogenase (Complex I) which catalyzes electron transfer from NADH through the respiratory chain, using ubiquinone as an electron acceptor. Part of the enzyme membrane arm which is embedded in the lipid bilayer and involved in proton translocation. The polypeptide is NADH-ubiquinone oxidoreductase chain 4L (MT-ND4L) (Ziphius cavirostris (Cuvier's beaked whale)).